We begin with the raw amino-acid sequence, 548 residues long: Probable malate:quinone oxidoreductase (548 aa).

Belongs to the MQO family. The cofactor is FAD.

The catalysed reaction is (S)-malate + a quinone = a quinol + oxaloacetate. Its pathway is carbohydrate metabolism; tricarboxylic acid cycle; oxaloacetate from (S)-malate (quinone route): step 1/1. The protein is Probable malate:quinone oxidoreductase of Escherichia coli O127:H6 (strain E2348/69 / EPEC).